A 166-amino-acid polypeptide reads, in one-letter code: PTS system glucose-specific EIIA component (166 aa).

Residues 34-138 (DPVFAQKMMG…SVISPIIITN (105 aa)) enclose the PTS EIIA type-1 domain. Zn(2+) is bound by residues H71 and H86. Catalysis depends on H86, which acts as the Tele-phosphohistidine intermediate; for EIIA activity. The residue at position 86 (H86) is a Phosphohistidine; by HPr.

As to quaternary structure, heterodimer with glycerol kinase (glpk). The cofactor is Zn(2+).

The protein localises to the cytoplasm. The phosphoenolpyruvate-dependent sugar phosphotransferase system (sugar PTS), a major carbohydrate active transport system, catalyzes the phosphorylation of incoming sugar substrates concomitantly with their translocation across the cell membrane. The enzyme II complex composed of PtsG and Crr is involved in glucose transport. In Staphylococcus aureus (strain MRSA252), this protein is PTS system glucose-specific EIIA component (crr).